The sequence spans 227 residues: MSQSPIELKGSNFTLSVVHLHNDQPEIILQALQEKVEQAPDFLKNAPVVINISALPADADLKALHHAIDSAGFRIVGMSGCRDEQQRRAVIKASLPLLSEGKKQKTSAKEDKPAEPAIKKTRVINLPVRSGQRIYAQGSDLIVTSNVSAGAELIADGNIHIYGMMRGRALAGASGDQECLVFCTHLNAELISIAGQYWLGDKIPTELAGKAAKLSLVNNELTIEPLI.

It belongs to the MinC family. Interacts with MinD and FtsZ.

Its function is as follows. Cell division inhibitor that blocks the formation of polar Z ring septums. Rapidly oscillates between the poles of the cell to destabilize FtsZ filaments that have formed before they mature into polar Z rings. Prevents FtsZ polymerization. The protein is Probable septum site-determining protein MinC of Photorhabdus laumondii subsp. laumondii (strain DSM 15139 / CIP 105565 / TT01) (Photorhabdus luminescens subsp. laumondii).